A 215-amino-acid polypeptide reads, in one-letter code: Transcription factor LAX PANICLE 1 (215 aa).

The segment at 1–48 (MHDPRGFPIHPQPYHLHPTAGGLGEGRMRGGGRRRPGAKLSTDPQSVA) is disordered. A basic motif; degenerate region spans residues 40–53 (LSTDPQSVAARERR). Residues 40 to 89 (LSTDPQSVAARERRHRISDRFRVLRSLVPGGSKMDTVSMLEQAIHYVKFL) form the bHLH domain. The helix-loop-helix motif stretch occupies residues 54-89 (HRISDRFRVLRSLVPGGSKMDTVSMLEQAIHYVKFL).

It belongs to the bHLH protein family. Efficient DNA binding requires dimerization with another bHLH protein. Interacts with LAX2. Expressed in the boundary between the shoot apical meristem (SAM) and the region of new meristem formation.

It is found in the nucleus. Functionally, transcription factor that seems to regulate organogenesis in postembryonic development. Involved in the regulation of shoot branching by controlling axillary meristem initiation. Functions in association with LAX2 to regulate the process of AM formation. Possesses transactivation activity in yeast. This Oryza sativa subsp. japonica (Rice) protein is Transcription factor LAX PANICLE 1.